Reading from the N-terminus, the 206-residue chain is Na(+)-translocating NADH-quinone reductase subunit E (206 aa).

Helical transmembrane passes span 12–32 (AVFV…FLAV), 36–56 (ISSA…TVPV), 85–105 (FLGL…LEMF), 118–138 (GVFL…LFMV), 148–168 (VIYG…LAGI), and 184–204 (LGIT…FSGI).

This sequence belongs to the NqrDE/RnfAE family. As to quaternary structure, composed of six subunits; NqrA, NqrB, NqrC, NqrD, NqrE and NqrF.

Its subcellular location is the cell inner membrane. It carries out the reaction a ubiquinone + n Na(+)(in) + NADH + H(+) = a ubiquinol + n Na(+)(out) + NAD(+). Its function is as follows. NQR complex catalyzes the reduction of ubiquinone-1 to ubiquinol by two successive reactions, coupled with the transport of Na(+) ions from the cytoplasm to the periplasm. NqrA to NqrE are probably involved in the second step, the conversion of ubisemiquinone to ubiquinol. The chain is Na(+)-translocating NADH-quinone reductase subunit E from Chromohalobacter salexigens (strain ATCC BAA-138 / DSM 3043 / CIP 106854 / NCIMB 13768 / 1H11).